A 196-amino-acid polypeptide reads, in one-letter code: Small ribosomal subunit protein uS4c (196 aa).

The region spanning 89–169 (MRLDNIIFRL…LPKHLTIDTV (81 aa)) is the S4 RNA-binding domain.

This sequence belongs to the universal ribosomal protein uS4 family. Part of the 30S ribosomal subunit. Contacts protein S5. The interaction surface between S4 and S5 is involved in control of translational fidelity.

The protein localises to the plastid. Its subcellular location is the chloroplast. In terms of biological role, one of the primary rRNA binding proteins, it binds directly to 16S rRNA where it nucleates assembly of the body of the 30S subunit. With S5 and S12 plays an important role in translational accuracy. The polypeptide is Small ribosomal subunit protein uS4c (rps4) (Stipellula capensis (Cape rice grass)).